Reading from the N-terminus, the 146-residue chain is DNA utilization protein HofO (146 aa).

A helical membrane pass occupies residues 20-37 (WAFWLLMLVTLIFLSSTH).

The protein resides in the cell inner membrane. Required for the use of extracellular DNA as a nutrient. This Escherichia coli (strain K12) protein is DNA utilization protein HofO (hofO).